Reading from the N-terminus, the 281-residue chain is 2-dehydro-3-deoxyphosphooctonate aldolase (281 aa).

It belongs to the KdsA family.

Its subcellular location is the cytoplasm. The catalysed reaction is D-arabinose 5-phosphate + phosphoenolpyruvate + H2O = 3-deoxy-alpha-D-manno-2-octulosonate-8-phosphate + phosphate. It participates in carbohydrate biosynthesis; 3-deoxy-D-manno-octulosonate biosynthesis; 3-deoxy-D-manno-octulosonate from D-ribulose 5-phosphate: step 2/3. The protein operates within bacterial outer membrane biogenesis; lipopolysaccharide biosynthesis. This Pseudomonas paraeruginosa (strain DSM 24068 / PA7) (Pseudomonas aeruginosa (strain PA7)) protein is 2-dehydro-3-deoxyphosphooctonate aldolase.